The chain runs to 101 residues: Signal recognition particle 19 kDa protein (101 aa).

Belongs to the SRP19 family. As to quaternary structure, part of the signal recognition particle protein translocation system, which is composed of SRP and FtsY. Archaeal SRP consists of a 7S RNA molecule of 300 nucleotides and two protein subunits: SRP54 and SRP19.

It is found in the cytoplasm. Functionally, involved in targeting and insertion of nascent membrane proteins into the cytoplasmic membrane. Binds directly to 7S RNA and mediates binding of the 54 kDa subunit of the SRP. This chain is Signal recognition particle 19 kDa protein, found in Methanosarcina acetivorans (strain ATCC 35395 / DSM 2834 / JCM 12185 / C2A).